The primary structure comprises 323 residues: Di/tripeptide transport ATP-binding protein DppF (323 aa).

One can recognise an ABC transporter domain in the interval 5–254 (LTARDLTRHY…PLHPYTRALL (250 aa)). Residue 47–54 (GESGCGKS) coordinates ATP.

This sequence belongs to the ABC transporter superfamily. As to quaternary structure, the complex is composed of two ATP-binding proteins (DppD and DppF), two transmembrane proteins (DppB and DppC) and a solute-binding protein (DppA1-A5). Five orthologous SBPs (DppA1-A5) are present in P.aeruginosa, which increases the substrate specificity of the DppBCDF transporter.

It localises to the cell inner membrane. It catalyses the reaction a dipeptide(out) + ATP + H2O = a dipeptide(in) + ADP + phosphate + H(+). Functionally, part of the ABC transporter DppABCDF involved in the uptake of various di/tripeptides. Is also involved in the uptake of phaseolotoxin, a toxic tripeptide inhibiting the enzyme ornithine carbamoyltransferase. Responsible for energy coupling to the transport system. The polypeptide is Di/tripeptide transport ATP-binding protein DppF (Pseudomonas aeruginosa (strain UCBPP-PA14)).